The sequence spans 164 residues: Phosphopantetheine adenylyltransferase (164 aa).

Substrate is bound at residue Ser-10. Residues 10 to 11 (SF) and His-18 each bind ATP. Positions 42, 74, and 88 each coordinate substrate. ATP contacts are provided by residues 89–91 (GLR), Glu-99, and 124–130 (YSFLSSS).

Belongs to the bacterial CoaD family. In terms of assembly, homohexamer. The cofactor is Mg(2+).

It is found in the cytoplasm. It carries out the reaction (R)-4'-phosphopantetheine + ATP + H(+) = 3'-dephospho-CoA + diphosphate. It participates in cofactor biosynthesis; coenzyme A biosynthesis; CoA from (R)-pantothenate: step 4/5. Reversibly transfers an adenylyl group from ATP to 4'-phosphopantetheine, yielding dephospho-CoA (dPCoA) and pyrophosphate. The protein is Phosphopantetheine adenylyltransferase of Bacillus licheniformis (strain ATCC 14580 / DSM 13 / JCM 2505 / CCUG 7422 / NBRC 12200 / NCIMB 9375 / NCTC 10341 / NRRL NRS-1264 / Gibson 46).